The primary structure comprises 989 residues: MSQYSDDDYSHEDDSEMEDEDEEDEYEPRSSRKGRSGKKRGRSNSDSDGRRGSKKKSSGSAFIDWEVEVDDDVEDDDDDVDVEDGKQQLKFGDFSLCFIVSGEADLPNEDSDHRRQYYQRGFHPHEEDVDELEKRTLERLSTKYAKDDYELDDVNDVDQQALLPSVRDPKLWLVKCAIGREREVAVCLMQKIVDRGSEFKIRSAIALDHLQNYVYIEADMEAHVKEAIKGMRNIYANQKILLVPIKEMTAVLSVESKAIDLSRDSWVRMKLGIYKGDLAQVVDVDNVRKRVTVKLIPRIDLQALANKLEGTENVKKKAFAPPPRFMNIDEARELHIRVEHRRDPMTGDYFENIGGMLFKDGFLYKKVSTKSIAAQNVTPTFDELERFKRPNENGEIDFVDESTLFANRKKGHFMKGDAVIVIKGDLKNLKGWIEKVDEENVLIRSEMKDLPNPIAVNGRELCKYFEPGNFVKVVSGIHEGGTGMIVKVDQHMLIILSDTTKEHICVFADHVAKSAEVTKGVTKIGDYELHDLVILSDFSFGVILKLDSEAIQILKGVPDSSEVSIVKASEIKYKIWKKINVQDRYKNVVAVKDVVRVIEGPSKGKQGPVVQIYKGVLFIHDRHNLEHTGFICTRCSSCVLAGGNFKTPALVPPSPRRFQRADMGYNPGAGGRHQGGRGRRGDDHLVGTYVKIRLGPFKGYSGRLVEVKDKLVRVELEAKIVTVERKAISDMTDNVVATPQYNMGSQTPMHPSRTPLHPCMTPMRHSGATPIHDGMRTPMRGRAWNPYMPMSPPRDNWEDGNPGSWGTSPYEAATPGSDWGSSTPGRSSYRDAGTPINNANAPSPMTPSSTSYLPTTPGGQAMTPGTDLDVMSLDIGGDAETRFIPGILVNVHKAGEDRNPGVIRDVLPDGSCVVALGHRGEGETIRATQNKVSLVCPKKNERVKILGGKYCGSTAKVIGEDGQDGIVKLDESLDIKILKLTILAKLVHE.

The segment covering 1–26 has biased composition (acidic residues); sequence MSQYSDDDYSHEDDSEMEDEDEEDEY. The interval 1-82 is disordered; that stretch reads MSQYSDDDYS…VEDDDDDVDV (82 aa). Residues 31-42 are compositionally biased toward basic residues; sequence SRKGRSGKKRGR. Acidic residues predominate over residues 65 to 82; it reads WEVEVDDDVEDDDDDVDV. KOW domains lie at 260 to 287, 412 to 439, 464 to 491, 588 to 615, and 683 to 710; these read DLSR…VDNV, HFMK…VDEE, YFEP…VDQH, VVAV…IYKG, and DHLV…VKDK. Residues 790-852 form a disordered region; sequence MSPPRDNWED…SPMTPSSTSY (63 aa). Low complexity predominate over residues 842–852; sequence PSPMTPSSTSY. In terms of domain architecture, KOW 6 spans 936–963; the sequence is CPKKNERVKILGGKYCGSTAKVIGEDGQ.

The protein belongs to the SPT5 family.

The protein localises to the nucleus. Its function is as follows. May regulate transcription elongation by RNA polymerase II. May enhance transcriptional pausing at sites proximal to the promoter, which may in turn facilitate the assembly of an elongation competent RNA polymerase II complex. This is Putative transcription elongation factor SPT5 homolog 2 from Arabidopsis thaliana (Mouse-ear cress).